A 356-amino-acid polypeptide reads, in one-letter code: Cell division control protein 10 (356 aa).

Positions 36–286 (KGFELNVLVV…NNYRKKIFEI (251 aa)) constitute a Septin-type G domain. The G1 motif stretch occupies residues 46–53 (GRRGLGTS). GTP-binding positions include 46 to 53 (GRRGLGTS) and threonine 70. The interval 93–96 (TYHE) is G3 motif. The interval 163–166 (PKAD) is G4 motif. Residues 164–172 (KADMYTPDE) and arginine 235 each bind GTP.

It belongs to the TRAFAC class TrmE-Era-EngA-EngB-Septin-like GTPase superfamily. Septin GTPase family. Component of the septin complex.

In terms of biological role, septins are GTPases involved in cytokinesis. The septins localize to the site of cleavage and act as a structural scaffold that recruits different components involved in diverse processes at specific stages during the cell cycle. Septins are also involved in cell morphogenesis, chitin deposition, cell cycle regulation, cell compartmentalization and spore wall formation. This chain is Cell division control protein 10 (CDC10), found in Encephalitozoon cuniculi (strain GB-M1) (Microsporidian parasite).